A 737-amino-acid chain; its full sequence is Polyribonucleotide nucleotidyltransferase (737 aa).

Mg(2+) contacts are provided by aspartate 489 and aspartate 495. Residues 556–615 (PKIDTIKIDVDKIKIVIGKGGETIDKIIAETGVKIDIDEEGNVSIYSSDQDAINRAKEII) enclose the KH domain. Residues 625-693 (DEVYRAKVVR…EKGRIDASMK (69 aa)) enclose the S1 motif domain. The disordered stretch occupies residues 691-737 (SMKALLPRPPKPEHDEKGEKSERPHRPRHHKDHKPKKEFTETPKDSE). A compositionally biased stretch (basic and acidic residues) spans 700 to 714 (PKPEHDEKGEKSERP). The segment covering 715-724 (HRPRHHKDHK) has biased composition (basic residues). Over residues 725 to 737 (PKKEFTETPKDSE) the composition is skewed to basic and acidic residues.

Belongs to the polyribonucleotide nucleotidyltransferase family. It depends on Mg(2+) as a cofactor.

It localises to the cytoplasm. The catalysed reaction is RNA(n+1) + phosphate = RNA(n) + a ribonucleoside 5'-diphosphate. Functionally, involved in mRNA degradation. Catalyzes the phosphorolysis of single-stranded polyribonucleotides processively in the 3'- to 5'-direction. In Streptococcus pneumoniae (strain 70585), this protein is Polyribonucleotide nucleotidyltransferase.